Consider the following 267-residue polypeptide: Sorbitol-6-phosphate 2-dehydrogenase (267 aa).

9-38 (DNVIIVTGGASGIGLAIVDELLSQGAHVQM) provides a ligand contact to NAD(+). Serine 147 provides a ligand contact to substrate. The active-site Proton acceptor is tyrosine 160.

This sequence belongs to the short-chain dehydrogenases/reductases (SDR) family. Homotetramer.

The catalysed reaction is D-sorbitol 6-phosphate + NAD(+) = beta-D-fructose 6-phosphate + NADH + H(+). It participates in carbohydrate metabolism; D-sorbitol degradation; D-fructose 6-phosphate from D-sorbitol 6-phosphate: step 1/1. In Klebsiella pneumoniae, this protein is Sorbitol-6-phosphate 2-dehydrogenase (sorD).